A 382-amino-acid polypeptide reads, in one-letter code: Osmoprotectant import ATP-binding protein OsmV (382 aa).

One can recognise an ABC transporter domain in the interval 2-241 (IKLENLTKQF…PANEFVGSFV (240 aa)). 39–46 (GPSGCGKT) is a binding site for ATP. 2 CBS domains span residues 258 to 320 (VTDQ…THPF) and 322 to 373 (ITGK…GRTR).

It belongs to the ABC transporter superfamily. As to quaternary structure, the complex is composed of two ATP-binding proteins (OsmV), two transmembrane proteins (OsmW and OsmY) and a solute-binding protein (OsmX).

The protein localises to the cell inner membrane. Its function is as follows. Part of the OsmU ABC transporter complex, which is involved in the uptake of osmoprotectants such as choline-O-sulfate and glycine betaine. Probably responsible for energy coupling to the transport system. In Salmonella typhimurium (strain LT2 / SGSC1412 / ATCC 700720), this protein is Osmoprotectant import ATP-binding protein OsmV (osmV).